A 147-amino-acid chain; its full sequence is Small ribosomal subunit protein uS12 (147 aa).

This sequence belongs to the universal ribosomal protein uS12 family. Part of the 30S ribosomal subunit.

Functionally, with S4 and S5 plays an important role in translational accuracy. Located at the interface of the 30S and 50S subunits. The chain is Small ribosomal subunit protein uS12 from Pyrococcus abyssi (strain GE5 / Orsay).